A 996-amino-acid chain; its full sequence is Alanine--tRNA ligase, chloroplastic/mitochondrial (996 aa).

Zn(2+) contacts are provided by His677, His681, Cys779, and His783.

It belongs to the class-II aminoacyl-tRNA synthetase family. In terms of assembly, monomer. Zn(2+) serves as cofactor.

The protein localises to the plastid. It is found in the chloroplast. The protein resides in the mitochondrion. The catalysed reaction is tRNA(Ala) + L-alanine + ATP = L-alanyl-tRNA(Ala) + AMP + diphosphate. Catalyzes the attachment of alanine to tRNA(Ala) in a two-step reaction: alanine is first activated by ATP to form Ala-AMP and then transferred to the acceptor end of tRNA(Ala). Also edits incorrectly charged tRNA(Ala) via its editing domain. In Oryza sativa subsp. japonica (Rice), this protein is Alanine--tRNA ligase, chloroplastic/mitochondrial.